The following is a 269-amino-acid chain: Probable ribosomal RNA small subunit methyltransferase A (269 aa).

6 residues coordinate S-adenosyl-L-methionine: H23, L25, G50, E71, D95, and N110.

This sequence belongs to the class I-like SAM-binding methyltransferase superfamily. rRNA adenine N(6)-methyltransferase family. RsmA subfamily.

It is found in the cytoplasm. Specifically dimethylates two adjacent adenosines in the loop of a conserved hairpin near the 3'-end of 16S rRNA in the 30S particle. May play a critical role in biogenesis of 30S subunits. This is Probable ribosomal RNA small subunit methyltransferase A from Pyrococcus abyssi (strain GE5 / Orsay).